A 107-amino-acid polypeptide reads, in one-letter code: MSESSSKSSQPLASKQEKDGTEKRGRGRPRKQPPVSPGTALVGSQKEPSEVPTPKRPRGRPKGSKNKGAAKTRKTTTTPGRKPRGRPKKLEKEEEEGISQESSEEEQ.

Residues 1 to 107 are disordered; it reads MSESSSKSSQ…ISQESSEEEQ (107 aa). Position 2 is an N-acetylserine (S2). K7 is modified (N6-acetyllysine). ADP-ribosylserine is present on S8. Residue S9 is modified to ADP-ribosylserine; alternate. Position 9 is a phosphoserine; alternate (S9). K15 is modified (N6-acetyllysine; alternate). K15 is covalently cross-linked (Glycyl lysine isopeptide (Lys-Gly) (interchain with G-Cter in SUMO2); alternate). Basic and acidic residues predominate over residues 15–24; it reads KQEKDGTEKR. The segment at residues 21-31 is a DNA-binding region (a.T hook 1); sequence TEKRGRGRPRK. Residue R26 is modified to Asymmetric dimethylarginine; alternate. R26 bears the Omega-N-methylarginine; alternate mark. Symmetric dimethylarginine; alternate is present on R26. S36 carries the post-translational modification Phosphoserine; by HIPK2 and CDC2. Phosphothreonine occurs at positions 39 and 42. Phosphoserine is present on residues S44 and S49. Position 53 is a phosphothreonine; by HIPK2 and CDC2 (T53). A DNA-binding region (a.T hook 2) is located at residues 53 to 63; sequence TPKRPRGRPKG. The interaction with HIPK2 stretch occupies residues 53-77; the sequence is TPKRPRGRPKGSKNKGAAKTRKTTT. The segment covering 55–74 has biased composition (basic residues); that stretch reads KRPRGRPKGSKNKGAAKTRK. R58 and R60 each carry asymmetric dimethylarginine; by PRMT6; alternate. R58 and R60 each carry omega-N-methylarginine; by PRMT6; alternate. Position 67 is a phosphothreonine (K67). T78 bears the Phosphothreonine; by HIPK2 and CDC2 mark. A DNA-binding region (a.T hook 3) is located at residues 78-89; sequence TPGRKPRGRPKK. A compositionally biased stretch (acidic residues) spans 93-107; sequence EEEEGISQESSEEEQ. Residue S99 is modified to Phosphoserine. 2 positions are modified to phosphoserine; by CK: S102 and S103.

It belongs to the HMGA family. As to quaternary structure, interacts with HIPK2. Constitutively phosphorylated on two or three sites. Hyperphosphorylated at early stages of apoptosis, followed by dephosphorylation and methylation, which coincides with chromatin condensation. Isoforms HMG-I and HMG-Y can be phosphorylated by HIPK2. Phosphorylation of HMG-I at Ser-36, Thr-53 and Thr-78 and of HMG-Y at Thr-42 and Thr-67 by HIPK2 modulates DNA-binding affinity. In terms of processing, HMG-Y is not methylated. Post-translationally, methylation at Arg-58 is mutually exclusive with methylation at Arg-60.

Its subcellular location is the nucleus. It localises to the chromosome. Its function is as follows. HMG-I/Y bind preferentially to the minor groove of A+T rich regions in double-stranded DNA. It is suggested that these proteins could function in nucleosome phasing and in the 3'-end processing of mRNA transcripts. They are also involved in the transcription regulation of genes containing, or in close proximity to A+T-rich regions. The polypeptide is High mobility group protein HMG-I/HMG-Y (HMGA1) (Homo sapiens (Human)).